We begin with the raw amino-acid sequence, 103 residues long: Large ribosomal subunit protein uL24 (103 aa).

Belongs to the universal ribosomal protein uL24 family. Part of the 50S ribosomal subunit.

In terms of biological role, one of two assembly initiator proteins, it binds directly to the 5'-end of the 23S rRNA, where it nucleates assembly of the 50S subunit. One of the proteins that surrounds the polypeptide exit tunnel on the outside of the subunit. The protein is Large ribosomal subunit protein uL24 of Lachnospira eligens (strain ATCC 27750 / DSM 3376 / VPI C15-48 / C15-B4) (Eubacterium eligens).